Consider the following 187-residue polypeptide: UPF0301 protein YqgE (187 aa).

This sequence belongs to the UPF0301 (AlgH) family.

The sequence is that of UPF0301 protein YqgE from Salmonella choleraesuis (strain SC-B67).